A 465-amino-acid polypeptide reads, in one-letter code: Cysteine--tRNA ligase (465 aa).

Position 29 (C29) interacts with Zn(2+). Positions 31–41 match the 'HIGH' region motif; sequence PTVYNYIHIGN. Positions 209, 234, and 238 each coordinate Zn(2+). The 'KMSKS' region signature appears at 266 to 270; it reads KMSKS. Residue K269 coordinates ATP. The residue at position 270 (S270) is a Phosphoserine.

This sequence belongs to the class-I aminoacyl-tRNA synthetase family. In terms of assembly, monomer. Zn(2+) is required as a cofactor.

It is found in the cytoplasm. It carries out the reaction tRNA(Cys) + L-cysteine + ATP = L-cysteinyl-tRNA(Cys) + AMP + diphosphate. The protein is Cysteine--tRNA ligase of Bacillus thuringiensis (strain Al Hakam).